We begin with the raw amino-acid sequence, 185 residues long: Adenine phosphoribosyltransferase (185 aa).

It belongs to the purine/pyrimidine phosphoribosyltransferase family. As to quaternary structure, homodimer.

It is found in the cytoplasm. The enzyme catalyses AMP + diphosphate = 5-phospho-alpha-D-ribose 1-diphosphate + adenine. Its pathway is purine metabolism; AMP biosynthesis via salvage pathway; AMP from adenine: step 1/1. In terms of biological role, catalyzes a salvage reaction resulting in the formation of AMP, that is energically less costly than de novo synthesis. This chain is Adenine phosphoribosyltransferase, found in Kineococcus radiotolerans (strain ATCC BAA-149 / DSM 14245 / SRS30216).